The following is a 297-amino-acid chain: Protein LRATD1 (297 aa).

Ser38 is modified (phosphoserine). The LRAT domain occupies Pro138–Ala233.

The protein belongs to the LRATD family.

The protein localises to the cytoplasm. Its function is as follows. May play a role in cell morphology and motility. The chain is Protein LRATD1 (LRATD1) from Bos taurus (Bovine).